The sequence spans 293 residues: Bifunctional protein FolD 1 (293 aa).

Residues G174–S176 and T240 contribute to the NADP(+) site.

Belongs to the tetrahydrofolate dehydrogenase/cyclohydrolase family. In terms of assembly, homodimer.

The enzyme catalyses (6R)-5,10-methylene-5,6,7,8-tetrahydrofolate + NADP(+) = (6R)-5,10-methenyltetrahydrofolate + NADPH. It carries out the reaction (6R)-5,10-methenyltetrahydrofolate + H2O = (6R)-10-formyltetrahydrofolate + H(+). It functions in the pathway one-carbon metabolism; tetrahydrofolate interconversion. Its function is as follows. Catalyzes the oxidation of 5,10-methylenetetrahydrofolate to 5,10-methenyltetrahydrofolate and then the hydrolysis of 5,10-methenyltetrahydrofolate to 10-formyltetrahydrofolate. The protein is Bifunctional protein FolD 1 of Saccharopolyspora erythraea (strain ATCC 11635 / DSM 40517 / JCM 4748 / NBRC 13426 / NCIMB 8594 / NRRL 2338).